Here is a 206-residue protein sequence, read N- to C-terminus: Charged multivesicular body protein 6 (206 aa).

Residue G2 is the site of N-myristoyl glycine attachment. Residues 11-103 (TRVTEQDRAV…AQIEMKVIEG (93 aa)) adopt a coiled-coil conformation. The interval 167-206 (EADLELPEVPGEELPEVPEQEPVREKERVKKKPEREMVAV) is disordered. The segment covering 168–185 (ADLELPEVPGEELPEVPE) has biased composition (acidic residues). Positions 170–181 (LELPEVPGEELP) match the Type-2 MIT-interacting motif motif. Positions 187–206 (EPVREKERVKKKPEREMVAV) are enriched in basic and acidic residues.

The protein belongs to the SNF7 family. Probable core component of the endosomal sorting required for transport complex III (ESCRT-III). ESCRT-III components are thought to multimerize to form a flat lattice on the perimeter membrane of the endosome.

It localises to the endomembrane system. The protein resides in the late endosome membrane. Its function is as follows. Probable core component of the endosomal sorting required for transport complex III (ESCRT-III) which is involved in multivesicular bodies (MVBs) formation and sorting of endosomal cargo proteins into MVBs. MVBs contain intraluminal vesicles (ILVs) that are generated by invagination and scission from the limiting membrane of the endosome and mostly are delivered to lysosomes enabling degradation of membrane proteins, such as stimulated growth factor receptors, lysosomal enzymes and lipids. In the ESCRT-III complex, it probably serves as an acceptor for the ESCRT-II complex on endosomal membranes. This chain is Charged multivesicular body protein 6 (chmp6), found in Danio rerio (Zebrafish).